The chain runs to 352 residues: MSASGPANYEYVVARIRHRRAGLFGDDEYRKLLRMGTGEIARFMEDSTYKDAVDSLASRHRGMDLVEYALNEGLAAEFDALLSWSEGRLYDQLAKYLRKFDAWNVKTVFRGLYSHADTDAIRADLVDAGEFDAAFLDELLSADSVETVVDALSGTIFDTYLEPAFADYEDEDSLVPLENAVDRAYYENLNPSQPATAAQDSPEALYAEFLTAEIDFRNARNALRLARSGVSVDPAAYFIEGGTLFEASEMTTLVERQSDLVSRIQDSTYGDELSTALTALEESDSLIGFEHALDRALLSYSDHLSYVYPTSVCPVLAYVLAKEREVDNIRAIARGREAGMSEDEIQAELVML.

This sequence belongs to the V-ATPase V0D/AC39 subunit family. In terms of assembly, has multiple subunits with at least A(3), B(3), C, D, E, F, H, I and proteolipid K(x).

It is found in the cell membrane. Component of the A-type ATP synthase that produces ATP from ADP in the presence of a proton gradient across the membrane. The chain is A-type ATP synthase subunit C from Halobacterium salinarum (strain ATCC 29341 / DSM 671 / R1).